The sequence spans 451 residues: UPF0210 protein Asuc_1169 (451 aa).

This sequence belongs to the UPF0210 family. Homodimer.

In Actinobacillus succinogenes (strain ATCC 55618 / DSM 22257 / CCUG 43843 / 130Z), this protein is UPF0210 protein Asuc_1169.